The primary structure comprises 96 residues: MVLYFYNKINRSFGLMILLYFFRSGGLAFRISELFLIFSIPLFALLINELSGVNRVLMFFILVYYISIVFLRRIYVHVVFGVNTFLPYKPIFDSYL.

2 consecutive transmembrane segments (helical) span residues 27-47 (LAFR…ALLI) and 50-70 (LSGV…SIVF).

The protein localises to the cell membrane. This is an uncharacterized protein from Haemophilus influenzae (strain ATCC 51907 / DSM 11121 / KW20 / Rd).